Reading from the N-terminus, the 411-residue chain is MDAALLLSLLEANCSLALAEELLLDGWGEPPDPEGPYSYCNTTLDQIGTCWPQSAPGALVERPCPEYFNGIKYNTTRNAYRECLENGTWASRVNYSHCEPILDDKQRKYDLHYRIALIINYLGHCVSVVALVAAFLLFLVLRSIRCLRNVIHWNLITTFILRNITWFLLQLIDHEVHEGNEVWCRCVTTIFNYFVVTNFFWMFVEGCYLHTAIVMTYSTEHLRKWLFLFIGWCIPCPIIVAWAVGKLYYENEQCWFGKEPGDLVDYIYQGPIILVLLINFVFLFNIVRILMTKLRASTTSETIQYRKAVKATLVLLPLLGITYMLFFVNPGEDDLSQIVFIYFNSFLQSFQGFFVSVFYCFFNGEVRSALRKRWHRWQDHHALRVPVARAMSIPTSPTRISFHSIKQTAAV.

Residues 1 to 19 constitute a signal peptide (not cleaved); sequence MDAALLLSLLEANCSLALA. Topologically, residues 1 to 108 are extracellular; it reads MDAALLLSLL…EPILDDKQRK (108 aa). 5 N-linked (GlcNAc...) asparagine glycosylation sites follow: N13, N41, N74, N86, and N94. Intrachain disulfides connect C14–C50, C40–C83, and C64–C98. The helical transmembrane segment at 109–139 threads the bilayer; it reads YDLHYRIALIINYLGHCVSVVALVAAFLLFL. Residues 140–146 lie on the Cytoplasmic side of the membrane; the sequence is VLRSIRC. A helical transmembrane segment spans residues 147–171; that stretch reads LRNVIHWNLITTFILRNITWFLLQL. Residues 172 to 185 lie on the Extracellular side of the membrane; it reads IDHEVHEGNEVWCR. C184 and C254 are oxidised to a cystine. Residues 186–214 traverse the membrane as a helical segment; the sequence is CVTTIFNYFVVTNFFWMFVEGCYLHTAIV. Over 215-221 the chain is Cytoplasmic; sequence MTYSTEH. The helical transmembrane segment at 222-249 threads the bilayer; the sequence is LRKWLFLFIGWCIPCPIIVAWAVGKLYY. Residues 250-265 lie on the Extracellular side of the membrane; the sequence is ENEQCWFGKEPGDLVD. The helical transmembrane segment at 266–291 threads the bilayer; the sequence is YIYQGPIILVLLINFVFLFNIVRILM. Over 292–302 the chain is Cytoplasmic; sequence TKLRASTTSET. Residues 303-327 form a helical membrane-spanning segment; the sequence is IQYRKAVKATLVLLPLLGITYMLFF. Residues 328–334 lie on the Extracellular side of the membrane; sequence VNPGEDD. The chain crosses the membrane as a helical span at residues 335–364; it reads LSQIVFIYFNSFLQSFQGFFVSVFYCFFNG. Residues 365 to 411 lie on the Cytoplasmic side of the membrane; sequence EVRSALRKRWHRWQDHHALRVPVARAMSIPTSPTRISFHSIKQTAAV.

Belongs to the G-protein coupled receptor 2 family. As to quaternary structure, monomer. Interacts (via N-terminal extracellular domain) with CRF, UCN, UCN2 and UCN3. Post-translationally, a N-glycosylation site within the signal peptide impedes its proper cleavage and function. Predominantly expressed in limbic regions of the brain such as the lateral septum, the entorhinal cortex, the hypothalamic ventromedial nucleus and several amygdaloid nuclei. Also detectable in lung, kidney and heart.

It localises to the cell membrane. In terms of biological role, G-protein coupled receptor for CRH (corticotropin-releasing factor), UCN (urocortin), UCN2 and UCN3. Has high affinity for UCN. Ligand binding causes a conformation change that triggers signaling via guanine nucleotide-binding proteins (G proteins) and down-stream effectors, such as adenylate cyclase. Promotes the activation of adenylate cyclase, leading to increased intracellular cAMP levels. This chain is Corticotropin-releasing factor receptor 2 (Crhr2), found in Rattus norvegicus (Rat).